Here is a 559-residue protein sequence, read N- to C-terminus: Poly(U)-binding-splicing factor PUF60 (559 aa).

The inhibits homodimerization stretch occupies residues 1–516; that stretch reads MATATIALQV…EDAEIIVKIF (516 aa). Residues Gln14 and Lys43 each participate in a glycyl lysine isopeptide (Lys-Gly) (interchain with G-Cter in SUMO2) cross-link. At Thr60 the chain carries Phosphothreonine. Residues 77–559 form an inhibits transcriptional repression, interaction with ERCC3 and apoptosis induction region; it reads QSIKSVLVKQ…ERFDNSDLSA (483 aa). A Glycyl lysine isopeptide (Lys-Gly) (interchain with G-Cter in SUMO2) cross-link involves residue Lys80. The residue at position 112 (Ser112) is a Phosphoserine. RRM domains follow at residues 129–207 and 226–304; these read CRVY…RPSN and NRIY…KAVT. At Ser244 the chain carries Phosphoserine. An N6-acetyllysine modification is found at Lys251. Thr314 carries the post-translational modification Phosphothreonine. The tract at residues 416-437 is disordered; it reads KKEKEEEELFPESERPEMLSEQ. Lys419 participates in a covalent cross-link: Glycyl lysine isopeptide (Lys-Gly) (interchain with G-Cter in SUMO2). Positions 427 to 437 are enriched in basic and acidic residues; sequence ESERPEMLSEQ. N6-acetyllysine is present on Lys454. Lys458 participates in a covalent cross-link: Glycyl lysine isopeptide (Lys-Gly) (interchain with G-Cter in SUMO2). Residues 462 to 549 form the RRM 3; atypical domain; that stretch reads TVMVLRNMVD…RKVVAEVYDQ (88 aa).

The protein belongs to the RRM half pint family. As to quaternary structure, homodimer. Associates with the spliceosome. Found in a complex with RO60 and Y5 RNA. Found in a complex with FUBP1 and far upstream element (FUSE) DNA segment. Interacts directly with ERCC3. Interacts with CDK7 and GTF2H1. Interacts with SRSF11/P54. Does not interact with ERCC3 in xeroderma pigmentosum complementation group B (XPB) cells. Interacts with ARGLU1; interaction may be involved in ARGLU1-mediated modulation of alternative splicing. In terms of tissue distribution, isoform 2 is expressed in colonic epithelium and colorectal epithelium cancer (at protein level). Isoform 6 is expressed in colorectal epithelial cancer but below detection level in colonic epithelium. Expressed in heart, brain, placenta, lung, liver, skeletal muscle, kidney, pancreas, spleen, thymus, prostate, testis, ovary, small intestine, colon and peripheral blood leukocytes.

Its subcellular location is the nucleus. Its function is as follows. DNA- and RNA-binding protein, involved in several nuclear processes such as pre-mRNA splicing, apoptosis and transcription regulation. In association with FUBP1 regulates MYC transcription at the P2 promoter through the core-TFIIH basal transcription factor. Acts as a transcriptional repressor through the core-TFIIH basal transcription factor. Represses FUBP1-induced transcriptional activation but not basal transcription. Decreases ERCC3 helicase activity. Does not repress TFIIH-mediated transcription in xeroderma pigmentosum complementation group B (XPB) cells. Is also involved in pre-mRNA splicing. Promotes splicing of an intron with weak 3'-splice site and pyrimidine tract in a cooperative manner with U2AF2. Involved in apoptosis induction when overexpressed in HeLa cells. Isoform 6 failed to repress MYC transcription and inhibited FIR-induced apoptosis in colorectal cancer. Isoform 6 may contribute to tumor progression by enabling increased MYC expression and greater resistance to apoptosis in tumors than in normal cells. Modulates alternative splicing of several mRNAs. Binds to relaxed DNA of active promoter regions. Binds to the pyrimidine tract and 3'-splice site regions of pre-mRNA; binding is enhanced in presence of U2AF2. Binds to Y5 RNA in association with RO60. Binds to poly(U) RNA. The protein is Poly(U)-binding-splicing factor PUF60 of Homo sapiens (Human).